The primary structure comprises 536 residues: Aminopeptidase (536 aa).

Residues 1-24 (MSNKNNLRYALGALALSVSAASLA) form the signal peptide. The PA domain maps to 152-255 (AGDVTAKVVP…ATYDNGVAWS (104 aa)). Position 196 is a phosphothreonine (threonine 196). Residues histidine 296 and aspartate 308 each contribute to the Zn(2+) site. Glutamate 340 (proton acceptor) is an active-site residue. Zn(2+) contacts are provided by glutamate 341, aspartate 369, and histidine 467. The cysteines at positions 465 and 470 are disulfide-linked.

The protein belongs to the peptidase M28 family. M28A subfamily. Zn(2+) is required as a cofactor.

The protein localises to the secreted. The catalysed reaction is Release of an N-terminal amino acid, Xaa-|-Yaa-, in which Xaa is preferably Leu, but may be other amino acids including Pro although not Arg or Lys, and Yaa may be Pro. Amino acid amides and methyl esters are also readily hydrolyzed, but rates on arylamides are exceedingly low.. Functionally, a secreted aminopeptidase. Acts on free N-terminal amino groups with a very strong preference for Leu in the first position. The chain is Aminopeptidase from Pseudomonas aeruginosa (strain UCBPP-PA14).